A 189-amino-acid polypeptide reads, in one-letter code: Putative zinc finger protein ORF189 (189 aa).

The segment at 114-137 adopts a C2H2-type zinc-finger fold; sequence YVCPYCVSRFPTVRALKIHLKRRH.

The sequence is that of Putative zinc finger protein ORF189 from Acidianus two-tailed virus (ATV).